Here is a 360-residue protein sequence, read N- to C-terminus: Phospho-N-acetylmuramoyl-pentapeptide-transferase (360 aa).

A run of 10 helical transmembrane segments spans residues Ala26 to Lys46, Gly70 to Trp90, Ser94 to Val114, Trp132 to Gly152, Ile168 to Ser188, Gly199 to Thr219, Ala236 to Phe256, Val263 to Leu283, Leu288 to Val308, and Val338 to Lys358.

It belongs to the glycosyltransferase 4 family. MraY subfamily. It depends on Mg(2+) as a cofactor.

Its subcellular location is the cell inner membrane. It carries out the reaction UDP-N-acetyl-alpha-D-muramoyl-L-alanyl-gamma-D-glutamyl-meso-2,6-diaminopimeloyl-D-alanyl-D-alanine + di-trans,octa-cis-undecaprenyl phosphate = di-trans,octa-cis-undecaprenyl diphospho-N-acetyl-alpha-D-muramoyl-L-alanyl-D-glutamyl-meso-2,6-diaminopimeloyl-D-alanyl-D-alanine + UMP. The protein operates within cell wall biogenesis; peptidoglycan biosynthesis. In terms of biological role, catalyzes the initial step of the lipid cycle reactions in the biosynthesis of the cell wall peptidoglycan: transfers peptidoglycan precursor phospho-MurNAc-pentapeptide from UDP-MurNAc-pentapeptide onto the lipid carrier undecaprenyl phosphate, yielding undecaprenyl-pyrophosphoryl-MurNAc-pentapeptide, known as lipid I. The sequence is that of Phospho-N-acetylmuramoyl-pentapeptide-transferase from Vibrio campbellii (strain ATCC BAA-1116).